Here is a 347-residue protein sequence, read N- to C-terminus: Ketol-acid reductoisomerase (NADP(+)) (347 aa).

Residues 3-182 (TKMFYDKDID…GSGRAGILET (180 aa)) enclose the KARI N-terminal Rossmann domain. NADP(+) is bound by residues 26–29 (YGAQ), arginine 49, serine 53, and 83–86 (DELQ). The active site involves histidine 108. Glycine 134 contacts NADP(+). The region spanning 183–328 (TFEEETTEDL…KKVRAMMPWI (146 aa)) is the KARI C-terminal knotted domain. Positions 191, 195, 227, and 231 each coordinate Mg(2+). Serine 252 provides a ligand contact to substrate.

The protein belongs to the ketol-acid reductoisomerase family. Requires Mg(2+) as cofactor.

The catalysed reaction is (2R)-2,3-dihydroxy-3-methylbutanoate + NADP(+) = (2S)-2-acetolactate + NADPH + H(+). It carries out the reaction (2R,3R)-2,3-dihydroxy-3-methylpentanoate + NADP(+) = (S)-2-ethyl-2-hydroxy-3-oxobutanoate + NADPH + H(+). It participates in amino-acid biosynthesis; L-isoleucine biosynthesis; L-isoleucine from 2-oxobutanoate: step 2/4. The protein operates within amino-acid biosynthesis; L-valine biosynthesis; L-valine from pyruvate: step 2/4. In terms of biological role, involved in the biosynthesis of branched-chain amino acids (BCAA). Catalyzes an alkyl-migration followed by a ketol-acid reduction of (S)-2-acetolactate (S2AL) to yield (R)-2,3-dihydroxy-isovalerate. In the isomerase reaction, S2AL is rearranged via a Mg-dependent methyl migration to produce 3-hydroxy-3-methyl-2-ketobutyrate (HMKB). In the reductase reaction, this 2-ketoacid undergoes a metal-dependent reduction by NADPH to yield (R)-2,3-dihydroxy-isovalerate. This chain is Ketol-acid reductoisomerase (NADP(+)), found in Leuconostoc mesenteroides subsp. mesenteroides (strain ATCC 8293 / DSM 20343 / BCRC 11652 / CCM 1803 / JCM 6124 / NCDO 523 / NBRC 100496 / NCIMB 8023 / NCTC 12954 / NRRL B-1118 / 37Y).